Consider the following 523-residue polypeptide: Apoptosis inhibitor 5 (523 aa).

The interval 1–360 is ARM-like and Heat-like helical repeats; the sequence is MPTVEELYRN…HQLGRKLPDF (360 aa). Residues 446 to 523 are disordered; that stretch reads VQKADANQKR…RGNRSRGRIY (78 aa). The Nuclear localization signal signature appears at 454-475; it reads KRTSEDTTSSSPPKKASAGPKR. Over residues 460-471 the composition is skewed to low complexity; it reads TTSSSPPKKASA. A compositionally biased stretch (polar residues) spans 487-497; it reads KYSSNLGSFSY. Residues 502-515 are compositionally biased toward gly residues; it reads GFRGGRGRGWGGRG.

The protein belongs to the API5 family. Monomer.

It localises to the nucleus. The protein localises to the cytoplasm. In terms of biological role, antiapoptotic factor that may have a role in protein assembly. The sequence is that of Apoptosis inhibitor 5 (API5) from Gallus gallus (Chicken).